The primary structure comprises 365 residues: Pyruvate dehydrogenase E1 component subunit beta, mitochondrial (365 aa).

The N-terminal 24 residues, 1-24 (MLRTRLIQAASSAQRAFSTSQKAL), are a transit peptide targeting the mitochondrion. E85 is a binding site for thiamine diphosphate. Positions 138, 186, 187, and 189 each coordinate K(+).

Thiamine diphosphate serves as cofactor. In terms of tissue distribution, expressed in salivary glands (at protein level).

The protein resides in the mitochondrion matrix. It catalyses the reaction N(6)-[(R)-lipoyl]-L-lysyl-[protein] + pyruvate + H(+) = N(6)-[(R)-S(8)-acetyldihydrolipoyl]-L-lysyl-[protein] + CO2. The pyruvate dehydrogenase complex catalyzes the overall conversion of pyruvate to acetyl-CoA and CO(2). Might play a role in regulating synapse structure formation at neuromuscular junctions. Might play a role in maintenance of mitochondrial morphology. This Drosophila melanogaster (Fruit fly) protein is Pyruvate dehydrogenase E1 component subunit beta, mitochondrial.